The primary structure comprises 274 residues: Cytochrome b-c1 complex subunit Rieske, mitochondrial (274 aa).

Residues 79 to 103 (SHTDIKVPDFSDYRRAEVLDSTKSS) are Mitochondrial matrix-facing. Residues 104-140 (KESSEARKGFSYLVTATTTVGVAYAAKNAVSQFVSSM) form a helical membrane-spanning segment. The Mitochondrial intermembrane segment spans residues 141 to 274 (SASADVLAMS…FTSGDVVVVG (134 aa)). One can recognise a Rieske domain in the interval 187–272 (EAAVEVSQLR…YEFTSGDVVV (86 aa)). C217, H219, C236, H239, and S241 together coordinate [2Fe-2S] cluster. A disulfide bond links C222 and C238.

The protein belongs to the Rieske iron-sulfur protein family. As to quaternary structure, component of the ubiquinol-cytochrome c oxidoreductase (cytochrome b-c1 complex, complex III, CIII), a multisubunit enzyme composed of 11 subunits. The complex is composed of 3 respiratory subunits cytochrome b, cytochrome c1 and Rieske protein UQCRFS1, 2 core protein subunits UQCRC1/QCR1 and UQCRC2/QCR2, and 6 low-molecular weight protein subunits UQCRH/QCR6, UQCRB/QCR7, UQCRQ/QCR8, UQCR10/QCR9, UQCR11/QCR10 and subunit 9, the cleavage product of Rieske protein UQCRFS1. The complex exists as an obligatory dimer and forms supercomplexes (SCs) in the inner mitochondrial membrane with NADH-ubiquinone oxidoreductase (complex I, CI) and cytochrome c oxidase (complex IV, CIV), resulting in different assemblies (supercomplex SCI(1)III(2)IV(1) and megacomplex MCI(2)III(2)IV(2)). Incorporation of the Rieske protein UQCRFS1 is the penultimate step in complex III assembly. Interacts with TTC19, which is involved in the clearance of UQCRFS1 fragments. Component of the ubiquinol-cytochrome c oxidoreductase (cytochrome b-c1 complex, complex III, CIII). Subunit 9 corresponds to the mitochondrial targeting sequence (MTS) of Rieske protein UQCRFS1. It is retained after processing and incorporated inside complex III, where it remains bound to the complex and localizes between the 2 core subunits UQCRC1/QCR1 and UQCRC2/QCR2. It depends on [2Fe-2S] cluster as a cofactor. Post-translationally, proteolytic processing is necessary for the correct insertion of UQCRFS1 in the complex III dimer. Several fragments are generated during UQCRFS1 insertion, most probably due to the endogenous matrix-processing peptidase (MPP) activity of the 2 core protein subunits UQCRC1/QCR1 and UQCRC2/QCR2, which are homologous to the 2 mitochondrial-processing peptidase (MPP) subunits beta-MPP and alpha-MPP respectively. The action of the protease is also necessary for the clearance of the UQCRFS1 fragments.

It localises to the mitochondrion inner membrane. The catalysed reaction is a quinol + 2 Fe(III)-[cytochrome c](out) = a quinone + 2 Fe(II)-[cytochrome c](out) + 2 H(+)(out). Component of the ubiquinol-cytochrome c oxidoreductase, a multisubunit transmembrane complex that is part of the mitochondrial electron transport chain which drives oxidative phosphorylation. The respiratory chain contains 3 multisubunit complexes succinate dehydrogenase (complex II, CII), ubiquinol-cytochrome c oxidoreductase (cytochrome b-c1 complex, complex III, CIII) and cytochrome c oxidase (complex IV, CIV), that cooperate to transfer electrons derived from NADH and succinate to molecular oxygen, creating an electrochemical gradient over the inner membrane that drives transmembrane transport and the ATP synthase. The cytochrome b-c1 complex catalyzes electron transfer from ubiquinol to cytochrome c, linking this redox reaction to translocation of protons across the mitochondrial inner membrane, with protons being carried across the membrane as hydrogens on the quinol. In the process called Q cycle, 2 protons are consumed from the matrix, 4 protons are released into the intermembrane space and 2 electrons are passed to cytochrome c. The Rieske protein is a catalytic core subunit containing a [2Fe-2S] iron-sulfur cluster. It cycles between 2 conformational states during catalysis to transfer electrons from the quinol bound in the Q(0) site in cytochrome b to cytochrome c1. Incorporation of UQCRFS1 is the penultimate step in complex III assembly. Its function is as follows. Component of the ubiquinol-cytochrome c oxidoreductase (cytochrome b-c1 complex, complex III, CIII). UQCRFS1 undergoes proteolytic processing once it is incorporated in the complex III dimer. One of the fragments, called subunit 9, corresponds to its mitochondrial targeting sequence (MTS). The proteolytic processing is necessary for the correct insertion of UQCRFS1 in the complex III dimer, but the persistence of UQCRFS1-derived fragments may prevent newly imported UQCRFS1 to be processed and assembled into complex III and is detrimental for the complex III structure and function. The chain is Cytochrome b-c1 complex subunit Rieske, mitochondrial (Uqcrfs1) from Rattus norvegicus (Rat).